Consider the following 212-residue polypeptide: Glutathione S-transferase hmp2 (212 aa).

The region spanning 1 to 80 (MVIKLYGSAM…YLARKYDSGT (80 aa)) is the GST N-terminal domain. Residues 51–52 (KV) and 64–65 (ES) each bind glutathione. One can recognise a GST C-terminal domain in the interval 88–212 (DHEAYGRFEQ…TWIKATAEAR (125 aa)).

The protein belongs to the GST superfamily.

The enzyme catalyses RX + glutathione = an S-substituted glutathione + a halide anion + H(+). Its pathway is secondary metabolite biosynthesis. Functionally, glutathione S-transferase; part of the gene cluster that mediates the biosynthesis of hypothemycin, a resorcylic acid lactone (RAL) that irreversibly inhibits a subset of protein kinases with a conserved cysteine in the ATP binding site such as human ERK2. The first step is performed by both PKSs hmp3 and hmp8 and leads to the production of 7',8'-dehydrozearalenol (DHZ). The highly reducing PKS hpm8 synthesizes the reduced hexaketide (7S,11S,2E,8E)-7,11-dihydroxy-dodeca-2,8-dienoate, which is transferred downstream to the non-reducing PKS hpm3. Hpm3 then extends the reduced hexaketide to a nonaketide, after which regioselective cyclization and macrolactonization affords DHZ. The next step is the conversion of DHZ into aigialomycin C and is performed by the O-methyltransferase hmp5, the FAD-binding monooxygenase hmp7, and the cytochrome P450 monooxygenase hmp1. The wide substrate tolerance of the hmp5 and hmp7 implies that the reactions from DHZ to aigialomycin C can occur in any order. The steps from aigialomycin C to hypothemycin are less well established. The FAD-linked oxidoreductase hmp9 presumably catalyzes oxidation of the C-6' hydroxyl to a ketone. The timing of this oxidation is important, since the resulting enone functional group is a Michael acceptor that can react spontaneously with glutathione, an abundant metabolite in fungal cells. The glutathione S-transferase hmp2 catalyzes cis-trans isomerization of the 7',8' double bond with equilibrium favoring the trans isomer. The hpm6-encoded transporter might preferentially pump hypothemycin out of the cell relative to the trans isomer aigialomycin A. The cis-to-trans isomerization may be coupled with C-4' hydroxylation, since all known hypothemycin analogs containing the enone functional group also have hydroxyl groups at both C-4' and C-5'. The chain is Glutathione S-transferase hmp2 from Hypomyces subiculosus (Nectria subiculosa).